The primary structure comprises 325 residues: Tagatose 1,6-diphosphate aldolase 1 (325 aa).

This sequence belongs to the aldolase LacD family.

It carries out the reaction D-tagatofuranose 1,6-bisphosphate = D-glyceraldehyde 3-phosphate + dihydroxyacetone phosphate. It participates in carbohydrate metabolism; D-tagatose 6-phosphate degradation; D-glyceraldehyde 3-phosphate and glycerone phosphate from D-tagatose 6-phosphate: step 2/2. This is Tagatose 1,6-diphosphate aldolase 1 (lacD1) from Streptococcus pyogenes serotype M1.